The following is a 102-amino-acid chain: Small ribosomal subunit protein uS10 (102 aa).

This sequence belongs to the universal ribosomal protein uS10 family. Part of the 30S ribosomal subunit.

Functionally, involved in the binding of tRNA to the ribosomes. The sequence is that of Small ribosomal subunit protein uS10 from Caldanaerobacter subterraneus subsp. tengcongensis (strain DSM 15242 / JCM 11007 / NBRC 100824 / MB4) (Thermoanaerobacter tengcongensis).